A 46-amino-acid chain; its full sequence is Large ribosomal subunit protein bL34 (46 aa).

Belongs to the bacterial ribosomal protein bL34 family.

The chain is Large ribosomal subunit protein bL34 from Trichodesmium erythraeum (strain IMS101).